The primary structure comprises 51 residues: Insulin (51 aa).

Cystine bridges form between C7–C37, C19–C50, and C36–C41.

Belongs to the insulin family. As to quaternary structure, heterodimer of a B chain and an A chain linked by two disulfide bonds.

It is found in the secreted. In terms of biological role, insulin decreases blood glucose concentration. It increases cell permeability to monosaccharides, amino acids and fatty acids. It accelerates glycolysis, the pentose phosphate cycle, and glycogen synthesis in liver. The polypeptide is Insulin (INS) (Saimiri sciureus (Common squirrel monkey)).